The following is a 242-amino-acid chain: MQKGEKLYEGKAKVLFATDDPNMLIQYFKDDATAFNGIKKGTIADKGVVNSLISTRIYHILEKVGIPTHLEELLSPREQLVHKVEILPIEVVIRNRVAGSLARRLGIEEGTELARPLVEFYYKNDELDDPMVTIDHAEVFGWAKHREIEEMIEMSLRINDILIGFFANIGIDLIDYKLEYGRLAVSPSTLVLADEISPDGCRLWDMETGEKLDKDRFRRDLGGVEEAYQEVARRMGLEVPGR.

It belongs to the SAICAR synthetase family.

It carries out the reaction 5-amino-1-(5-phospho-D-ribosyl)imidazole-4-carboxylate + L-aspartate + ATP = (2S)-2-[5-amino-1-(5-phospho-beta-D-ribosyl)imidazole-4-carboxamido]succinate + ADP + phosphate + 2 H(+). It functions in the pathway purine metabolism; IMP biosynthesis via de novo pathway; 5-amino-1-(5-phospho-D-ribosyl)imidazole-4-carboxamide from 5-amino-1-(5-phospho-D-ribosyl)imidazole-4-carboxylate: step 1/2. This Magnetococcus marinus (strain ATCC BAA-1437 / JCM 17883 / MC-1) protein is Phosphoribosylaminoimidazole-succinocarboxamide synthase.